A 178-amino-acid chain; its full sequence is HTH-type transcriptional regulator SutR (178 aa).

Positions 12-66 (LKQLRQQRGWSLSRLAEATGVSKAMLGQIERNESSPTVATLWKIATGLNVPFSTF) constitute an HTH cro/C1-type domain. Residues 23–42 (LSRLAEATGVSKAMLGQIER) constitute a DNA-binding region (H-T-H motif). The region spanning 105–171 (QMASGAISES…GGEQTVHFHS (67 aa)) is the Cupin type-2 domain.

Its function is as follows. Regulates the expression of 12-16 transcription units involved in various steps of sulfur utilization. Represses expression of pfkB, fliZ, cysE, ydcO and its own expression. Activates expression of ypfN. Acts by binding to SutR boxes. The polypeptide is HTH-type transcriptional regulator SutR (Escherichia coli (strain K12)).